A 223-amino-acid chain; its full sequence is Probable 3-beta-hydroxysteroid-Delta(8),Delta(7)-isomerase (223 aa).

Helical transmembrane passes span 28-48 (IVSIYLGSSLLVVSLVWLLFG), 58-78 (LMCWWTFTGLTHVILEGYFVF), 115-135 (VEGITAVIVGPASLLAIYAIA), and 175-195 (FYYYSYYIGANCWWVLIPSLI). The region spanning 54–196 (LDKLLMCWWT…WWVLIPSLIS (143 aa)) is the EXPERA domain.

It belongs to the EBP family.

The protein resides in the endoplasmic reticulum membrane. The catalysed reaction is lathosterol = 5alpha-cholest-8-en-3beta-ol. It participates in steroid biosynthesis; sterol biosynthesis. In terms of biological role, catalyzes the conversion of Delta(8)-sterols to their corresponding Delta(7)-isomers. This Arabidopsis thaliana (Mouse-ear cress) protein is Probable 3-beta-hydroxysteroid-Delta(8),Delta(7)-isomerase.